A 314-amino-acid chain; its full sequence is tRNA dimethylallyltransferase (314 aa).

Residue 15 to 22 (GPTATGKS) coordinates ATP. A substrate-binding site is contributed by 17 to 22 (TATGKS). The interaction with substrate tRNA stretch occupies residues 40–43 (DSML).

It belongs to the IPP transferase family. As to quaternary structure, monomer. Requires Mg(2+) as cofactor.

It catalyses the reaction adenosine(37) in tRNA + dimethylallyl diphosphate = N(6)-dimethylallyladenosine(37) in tRNA + diphosphate. Its function is as follows. Catalyzes the transfer of a dimethylallyl group onto the adenine at position 37 in tRNAs that read codons beginning with uridine, leading to the formation of N6-(dimethylallyl)adenosine (i(6)A). The chain is tRNA dimethylallyltransferase from Pelotomaculum thermopropionicum (strain DSM 13744 / JCM 10971 / SI).